Consider the following 227-residue polypeptide: MDPIRACVFDAYGTLLDVNTAVMKHAHDIGGCAEELSSLWRQRQLEYSWTRTLMGRYADFWQLTTEALDFALESFGLLERTDLKNRLLDAYHELSAYPDAVGTLGALKAAGFTTAILSNGNNEMLRGALRAGNLTEALDQCISVDEIKIYKPDPRVYQFACDRLDVRPSEVCFVSSNAWDIGGAGAFGFNTVRINRINKPQEYSFAPQRHQLSSLSELPQLLLRLTQ.

The active-site Nucleophile is Asp10. An (S)-2-haloacid-binding positions include 11–12, Arg41, and 118–119; these read AY and SN. The segment at 175-180 is important for catalytic activity; sequence SSNAWD.

It belongs to the HAD-like hydrolase superfamily. S-2-haloalkanoic acid dehalogenase family.

It carries out the reaction an (S)-2-haloacid + H2O = a (2R)-2-hydroxycarboxylate + a halide anion + H(+). The catalysed reaction is (S)-2-chloropropanoate + H2O = (R)-lactate + chloride + H(+). In terms of biological role, catalyzes the hydrolytic dehalogenation of small (S)-2-haloalkanoic acids to yield the corresponding (R)-2-hydroxyalkanoic acids. Acts on acids of short chain lengths, C(2) to C(4), with inversion of configuration at C-2. Active with 2-halogenated carboxylic acids and converts only the S-isomer (or L-isomer) of 2-chloropropionic acid with inversion of configuration to produce R-lactate (or D-isomer). The sequence is that of (S)-2-haloacid dehalogenase 1 from Pseudomonas sp. (strain CBS-3).